The following is a 371-amino-acid chain: GDP-perosamine synthase (371 aa).

Lys-186 bears the N6-(pyridoxal phosphate)lysine mark.

It belongs to the DegT/DnrJ/EryC1 family. In terms of assembly, homodimer. It depends on pyridoxal 5'-phosphate as a cofactor.

The enzyme catalyses GDP-alpha-D-perosamine + 2-oxoglutarate = GDP-4-dehydro-alpha-D-rhamnose + L-glutamate. The protein operates within bacterial outer membrane biogenesis; LPS O-antigen biosynthesis. Catalyzes the synthesis of GDP-perosamine from GDP-4-keto-6-deoxy-D-mannose and L-glutamate. Can use only L-glutamate as amino donor. In vitro, can also use GDP-4-keto-3,6-dideoxymannose to produce GDP-3-deoxyperosamine. Involved in the formation of S-LPS, which is required for attachment of the protein S-layer to the outer membrane surface. The chain is GDP-perosamine synthase from Caulobacter vibrioides (strain ATCC 19089 / CIP 103742 / CB 15) (Caulobacter crescentus).